We begin with the raw amino-acid sequence, 63 residues long: Adipokinetic prohormone type 1 (63 aa).

The first 22 residues, 1–22 (MVQRCALVVLLVVAVAAALCSA), serve as a signal peptide directing secretion. The residue at position 23 (glutamine 23) is a Pyrrolidone carboxylic acid. Position 32 is a threonine amide (threonine 32).

Belongs to the AKH/HRTH/RPCH family.

The protein localises to the secreted. This hormone, released from cells in the corpora cardiaca, causes release of diglycerides from the fat body and stimulation of muscles to use these diglycerides as an energy source during energy-demanding processes. The protein is Adipokinetic prohormone type 1 of Locusta migratoria (Migratory locust).